Here is a 410-residue protein sequence, read N- to C-terminus: Argininosuccinate synthase (410 aa).

Residue alanine 6 to serine 14 coordinates ATP. Residue tyrosine 84 participates in L-citrulline binding. Residue glycine 114 coordinates ATP. Threonine 116, asparagine 120, and aspartate 121 together coordinate L-aspartate. Asparagine 120 serves as a coordination point for L-citrulline. Residues arginine 124, serine 169, serine 178, glutamate 254, and tyrosine 266 each coordinate L-citrulline.

It belongs to the argininosuccinate synthase family. Type 1 subfamily. Homotetramer.

It localises to the cytoplasm. It carries out the reaction L-citrulline + L-aspartate + ATP = 2-(N(omega)-L-arginino)succinate + AMP + diphosphate + H(+). It functions in the pathway amino-acid biosynthesis; L-arginine biosynthesis; L-arginine from L-ornithine and carbamoyl phosphate: step 2/3. The protein is Argininosuccinate synthase of Pyrococcus furiosus (strain ATCC 43587 / DSM 3638 / JCM 8422 / Vc1).